A 611-amino-acid polypeptide reads, in one-letter code: RAC serine/threonine-protein kinase (611 aa).

Residues 14 to 25 are compositionally biased toward low complexity; the sequence is VVASAPAPGSAS. Disordered regions lie at residues 14-33 and 45-88; these read VVAS…SPTT and QSTH…NTTF. Ser-30 is modified (phosphoserine). The PH domain maps to 106–211; the sequence is QVVKEGWLMK…WTEAIRNVSS (106 aa). The Protein kinase domain maps to 266 to 523; it reads FEFLKVLGKG…VKEIQAHPFF (258 aa). ATP is bound by residues 272–280 and Lys-295; that span reads LGKGTFGKV. Residue Asp-389 is the Proton acceptor of the active site. The AGC-kinase C-terminal domain occupies 524–597; sequence ASINWTDLVL…QGDMASTLGT (74 aa). Ser-586 carries the phosphoserine modification.

Belongs to the protein kinase superfamily. AGC Ser/Thr protein kinase family. RAC subfamily. In terms of assembly, interacts with trbl. Phosphorylated and activated by Pk61C/PDK1. Phosphorylated on Ser-586 by the TORC2 complex. As to expression, ubiquitously expressed. Present in ovary, where it is concentrated at the basal side of follicle cells.

It localises to the cytoplasm. Its subcellular location is the cytosol. The protein resides in the cell membrane. It catalyses the reaction L-seryl-[protein] + ATP = O-phospho-L-seryl-[protein] + ADP + H(+). The catalysed reaction is L-threonyl-[protein] + ATP = O-phospho-L-threonyl-[protein] + ADP + H(+). In terms of biological role, serine/threonine kinase involved in various developmental processes. During early embryogenesis, acts as a survival protein. During mid-embryogenesis, phosphorylates and activates trh, a transcription factor required for tracheal cell fate determination. Also regulates tracheal cell migration. Later in development, acts downstream of PI3K and Pk61C/PDK1 in the insulin receptor transduction pathway which regulates cell growth and organ size, by phosphorylating and antagonizing FOXO transcription factor. Controls follicle cell size during oogenesis. May also stimulate cell growth by phosphorylating Gig/Tsc2 and inactivating the Tsc complex. Dephosphorylation of 'Ser-586' by Phlpp triggers apoptosis and suppression of tumor growth. This Drosophila melanogaster (Fruit fly) protein is RAC serine/threonine-protein kinase.